A 147-amino-acid polypeptide reads, in one-letter code: 3-dehydroquinate dehydratase (147 aa).

Tyrosine 23 functions as the Proton acceptor in the catalytic mechanism. Substrate contacts are provided by asparagine 75, histidine 81, and aspartate 88. The active-site Proton donor is histidine 101. Residues 102 to 103 (LS) and arginine 112 contribute to the substrate site.

This sequence belongs to the type-II 3-dehydroquinase family. Homododecamer.

The catalysed reaction is 3-dehydroquinate = 3-dehydroshikimate + H2O. It participates in metabolic intermediate biosynthesis; chorismate biosynthesis; chorismate from D-erythrose 4-phosphate and phosphoenolpyruvate: step 3/7. In terms of biological role, catalyzes a trans-dehydration via an enolate intermediate. This is 3-dehydroquinate dehydratase from Stutzerimonas stutzeri (strain A1501) (Pseudomonas stutzeri).